Here is a 129-residue protein sequence, read N- to C-terminus: 3-oxo-4,17-pregnadiene-20-carboxyl-CoA hydratase beta subunit (129 aa).

This sequence belongs to the thioester dehydratase family. As to quaternary structure, heterodimer composed of ChsH1 and ChsH2. Two heterodimers combine to form a heterotetramer. The complex interacts with Ltp2 via the DUF35 C-terminal region of ChsH2. The ChsH1-ChsH2-Ltp2 protein complex is composed of two protomers that form a heterohexameric structure through the Ltp2 dimerization interface.

It carries out the reaction 3-oxochola-4,17-dien-22-oyl-CoA + H2O = 17-hydroxy-3-oxochol-4-en-22-oyl-CoA. The enzyme catalyses (2E)-octenoyl-CoA + H2O = 3-hydroxyoctanoyl-CoA. The catalysed reaction is (2E)-decenoyl-CoA + H2O = 3-hydroxydecanoyl-CoA. It functions in the pathway steroid metabolism; cholesterol degradation. Its activity is regulated as follows. In the absence of the Ltp2 aldolase, ChsH1/ChsH2 can hydrate only about 30% of the 3-OPDC-CoA substrate. Complete turnover requires the presence of Ltp2. Functionally, involved in cholesterol side chain degradation. Catalyzes the hydration of 3-oxo-4,17-pregnadiene-20-carboxyl-CoA (3-OPDC-CoA) to form 17-hydroxy-3-oxo-4-pregnene-20-carboxyl-CoA (17-HOPC-CoA), in the modified beta-oxidation pathway for cholesterol side chain degradation. Can also use octenoyl-CoA and decenoyl-CoA, with lower efficiency. This Mycobacterium tuberculosis (strain ATCC 25618 / H37Rv) protein is 3-oxo-4,17-pregnadiene-20-carboxyl-CoA hydratase beta subunit.